Consider the following 65-residue polypeptide: Large ribosomal subunit protein uL29 (65 aa).

This sequence belongs to the universal ribosomal protein uL29 family.

This is Large ribosomal subunit protein uL29 from Dehalococcoides mccartyi (strain ATCC BAA-2266 / KCTC 15142 / 195) (Dehalococcoides ethenogenes (strain 195)).